Consider the following 502-residue polypeptide: Probable cytosol aminopeptidase (502 aa).

K267 and D272 together coordinate Mn(2+). The active site involves K279. Mn(2+) contacts are provided by D290, D349, and E351. R353 is an active-site residue.

This sequence belongs to the peptidase M17 family. Mn(2+) is required as a cofactor.

Its subcellular location is the cytoplasm. It carries out the reaction Release of an N-terminal amino acid, Xaa-|-Yaa-, in which Xaa is preferably Leu, but may be other amino acids including Pro although not Arg or Lys, and Yaa may be Pro. Amino acid amides and methyl esters are also readily hydrolyzed, but rates on arylamides are exceedingly low.. The enzyme catalyses Release of an N-terminal amino acid, preferentially leucine, but not glutamic or aspartic acids.. In terms of biological role, presumably involved in the processing and regular turnover of intracellular proteins. Catalyzes the removal of unsubstituted N-terminal amino acids from various peptides. This is Probable cytosol aminopeptidase from Aeromonas salmonicida (strain A449).